We begin with the raw amino-acid sequence, 218 residues long: UPF0758 protein SAUSA300_1608 (218 aa).

The 123-residue stretch at 92 to 214 (KITQPSDVAD…FTSLVEAGYF (123 aa)) folds into the MPN domain. Zn(2+) contacts are provided by H163, H165, and D176. Residues 163–176 (HNHPSGDVTPSQED) carry the JAMM motif motif.

The protein belongs to the UPF0758 family.

The sequence is that of UPF0758 protein SAUSA300_1608 from Staphylococcus aureus (strain USA300).